Consider the following 105-residue polypeptide: Nucleoid-associated protein RPC_4847 (105 aa).

This sequence belongs to the YbaB/EbfC family. As to quaternary structure, homodimer.

The protein localises to the cytoplasm. It localises to the nucleoid. Functionally, binds to DNA and alters its conformation. May be involved in regulation of gene expression, nucleoid organization and DNA protection. The chain is Nucleoid-associated protein RPC_4847 from Rhodopseudomonas palustris (strain BisB18).